A 91-amino-acid chain; its full sequence is Small ribosomal subunit protein bS20 (91 aa).

Residues M1–S23 are disordered. The span at A7 to H20 shows a compositional bias: basic residues.

It belongs to the bacterial ribosomal protein bS20 family.

Its function is as follows. Binds directly to 16S ribosomal RNA. The sequence is that of Small ribosomal subunit protein bS20 from Pseudomonas paraeruginosa (strain DSM 24068 / PA7) (Pseudomonas aeruginosa (strain PA7)).